A 112-amino-acid polypeptide reads, in one-letter code: UPF0060 membrane protein Mpe_A1656 (112 aa).

4 consecutive transmembrane segments (helical) span residues 9 to 29 (GLFFVTAVAEIVGCYLPWLVL), 34 to 54 (SAWLLVPAAASLAVFAWLLTL), 65 to 85 (AYGGVYVVVALLWLWRVDGVV), and 91 to 111 (LVGGAICLAGMAIIALQPRAA).

This sequence belongs to the UPF0060 family.

The protein resides in the cell inner membrane. The polypeptide is UPF0060 membrane protein Mpe_A1656 (Methylibium petroleiphilum (strain ATCC BAA-1232 / LMG 22953 / PM1)).